The sequence spans 288 residues: Pantothenate synthetase (288 aa).

Residue 31–38 (MGNLHRGH) participates in ATP binding. Residue H38 is the Proton donor of the active site. A (R)-pantoate-binding site is contributed by Q62. A beta-alanine-binding site is contributed by Q62. Position 150–153 (150–153 (GQKD)) interacts with ATP. Q156 lines the (R)-pantoate pocket. ATP is bound by residues I179 and 187-190 (LSSR).

The protein belongs to the pantothenate synthetase family. Homodimer.

It localises to the cytoplasm. The catalysed reaction is (R)-pantoate + beta-alanine + ATP = (R)-pantothenate + AMP + diphosphate + H(+). It participates in cofactor biosynthesis; (R)-pantothenate biosynthesis; (R)-pantothenate from (R)-pantoate and beta-alanine: step 1/1. In terms of biological role, catalyzes the condensation of pantoate with beta-alanine in an ATP-dependent reaction via a pantoyl-adenylate intermediate. The polypeptide is Pantothenate synthetase (Wigglesworthia glossinidia brevipalpis).